The primary structure comprises 37 residues: Large ribosomal subunit protein bL36 (37 aa).

This sequence belongs to the bacterial ribosomal protein bL36 family.

This Salinispora tropica (strain ATCC BAA-916 / DSM 44818 / JCM 13857 / NBRC 105044 / CNB-440) protein is Large ribosomal subunit protein bL36.